The sequence spans 471 residues: Probable anion transporter 5, chloroplastic (471 aa).

The N-terminal 59 residues, 1–59 (MAASASASALQAERCLLVGVGAGPRRHRLPLRMPPPLHAPPALLLLPHRRRRRWPPAVR), are a transit peptide targeting the chloroplast. The tract at residues 56 to 76 (PAVRASPGEGGGGGGGGGGGG) is disordered. 4 consecutive transmembrane segments (helical) span residues 62–82 (PGEGGGGGGGGGGGGGLAGAL), 103–123 (IGVVAWSLATAIIPAVAGFMP), 162–182 (VVFGGLSFGSVLGLLFAPPII), and 185–205 (LGWESVFYIFGLLGIIWCLGF). Residues 63–76 (GEGGGGGGGGGGGG) are compositionally biased toward gly residues. Residues 226-247 (GQSPSGSSDLISSSVSPKSSES) form a disordered region. Positions 228-247 (SPSGSSDLISSSVSPKSSES) are enriched in low complexity. 6 helical membrane passes run 270–290 (VWAMIYAHFCGSWGHYTCLSW), 307–327 (AWVSVLPPLGSMIITSIAAPF), 348–368 (IAFLSPATFMMLSSVDLGVPP), 371–391 (IVAFLTSGLALSSFALSGLYC), 403–423 (ILLGITNTVGAVPGIVGVALT), and 435–455 (ISLFAPSIFFYLTGTAVWLAF).

It belongs to the major facilitator superfamily. Sodium/anion cotransporter (TC 2.A.1.14) family.

The protein localises to the plastid. Its subcellular location is the chloroplast membrane. Functionally, probable anion transporter. This is Probable anion transporter 5, chloroplastic (PHT4;5) from Oryza sativa subsp. japonica (Rice).